The sequence spans 227 residues: Flagellar transcriptional regulator FtcR (227 aa).

The Response regulatory domain maps to 1–116; that stretch reads MIVVVDDRDM…EILARINAIR (116 aa). The ompR/PhoB-type DNA-binding region spans 127 to 226; it reads ADGTQLGPIR…KRFLGYCINI (100 aa).

Its function is as follows. Required for transcription of flagellar genes. The sequence is that of Flagellar transcriptional regulator FtcR (ftcR) from Brucella abortus (strain 2308).